A 660-amino-acid chain; its full sequence is Peroxisomal acyl-coenzyme A oxidase 1 (660 aa).

At S26 the chain carries Phosphoserine. K89 and K90 each carry N6-succinyllysine. T139 and G178 together coordinate FAD. The residue at position 216 (K216) is an N6-acetyllysine. K241 bears the N6-succinyllysine mark. K255, K267, and K272 each carry N6-acetyllysine. K349 carries the N6-succinyllysine modification. E421 serves as the catalytic Proton acceptor. N6-acetyllysine; alternate is present on residues K437 and K446. An N6-succinyllysine; alternate mark is found at K437 and K446. Residues K500 and K504 each carry the N6-acetyllysine modification. N6-acetyllysine; alternate is present on K512. K512 carries the post-translational modification N6-succinyllysine; alternate. Residue K542 is modified to N6-succinyllysine. The residue at position 637 (K637) is an N6-acetyllysine; alternate. N6-succinyllysine; alternate is present on K637. Position 643 is an N6-succinyllysine (K643). The residue at position 649 (S649) is a Phosphoserine. K651 carries the post-translational modification N6-acetyllysine. K654 bears the N6-succinyllysine mark. Residues 658-660 (SKL) carry the Microbody targeting signal motif.

This sequence belongs to the acyl-CoA oxidase family. As to quaternary structure, homodimer. Interacts with LONP2. FAD is required as a cofactor. In terms of tissue distribution, widely expressed with highest levels of isoform 1 and isoform 2 detected in testis. Isoform 1 is expressed at higher levels than isoform 2 in liver and kidney while isoform 2 levels are higher in brain, lung, muscle, white adipose tissue and testis. Levels are almost equal in heart.

The protein resides in the peroxisome. It carries out the reaction a 2,3-saturated acyl-CoA + O2 = a (2E)-enoyl-CoA + H2O2. It catalyses the reaction hexadecanoyl-CoA + O2 = (2E)-hexadecenoyl-CoA + H2O2. The catalysed reaction is dodecanoyl-CoA + O2 = (2E)-dodecenoyl-CoA + H2O2. The enzyme catalyses octanoyl-CoA + O2 = (2E)-octenoyl-CoA + H2O2. It carries out the reaction decanoyl-CoA + O2 = (2E)-decenoyl-CoA + H2O2. It catalyses the reaction tetradecanoyl-CoA + O2 = (2E)-tetradecenoyl-CoA + H2O2. The catalysed reaction is hexadecanedioyl-CoA + O2 = (2E)-hexadecenedioyl-CoA + H2O2. The enzyme catalyses (5Z,8Z,11Z,14Z,17Z)-eicosapentaenoyl-CoA + O2 = (2E,5Z,8Z,11Z,14Z,17Z)-icosahexaenoyl-CoA + H2O2. It carries out the reaction tetracosanoyl-CoA + O2 = (2E)-tetracosenoyl-CoA + H2O2. It catalyses the reaction glutaryl-CoA + O2 = (2E)-glutaconyl-CoA + H2O2. The catalysed reaction is hexanoyl-CoA + O2 = (2E)-hexenoyl-CoA + H2O2. The enzyme catalyses octadecanoyl-CoA + O2 = (2E)-octadecenoyl-CoA + H2O2. It carries out the reaction (6Z,9Z,12Z,15Z,18Z,21Z)-tetracosahexaenoyl-CoA + O2 = (2E,6Z,9Z,12Z,15Z,18Z,21Z)-tetracosaheptaenoyl-CoA + H2O2. It functions in the pathway lipid metabolism; peroxisomal fatty acid beta-oxidation. Its function is as follows. Involved in the initial and rate-limiting step of peroxisomal beta-oxidation of straight-chain saturated and unsaturated very-long-chain fatty acids. Catalyzes the desaturation of fatty acyl-CoAs such as palmitoyl-CoA (hexadecanoyl-CoA) to 2-trans-enoyl-CoAs ((2E)-enoyl-CoAs) such as (2E)-hexadecenoyl-CoA, and donates electrons directly to molecular oxygen (O(2)), thereby producing hydrogen peroxide (H(2)O(2)). Shows highest activity against medium-chain fatty acyl-CoAs. Shows optimum activity with a chain length of 10 carbons (decanoyl-CoA) in vitro. Functionally, is active against a much broader range of substrates and shows activity towards long-chain fatty acyl-CoAs. The sequence is that of Peroxisomal acyl-coenzyme A oxidase 1 from Homo sapiens (Human).